The primary structure comprises 508 residues: Photosystem II CP47 reaction center protein (508 aa).

6 helical membrane passes run 21 to 36 (AVHIMHTALVAGWAGS), 101 to 115 (IVFSGLCFLAAIWHW), 140 to 156 (GIHLFLSGVACFGFGTF), 203 to 218 (IAAGTLGILAGLFHLS), 237 to 252 (VLSSSIAAVFFAAFVV), and 457 to 472 (SFALLFFFGHIWHGAR).

This sequence belongs to the PsbB/PsbC family. PsbB subfamily. In terms of assembly, PSII is composed of 1 copy each of membrane proteins PsbA, PsbB, PsbC, PsbD, PsbE, PsbF, PsbH, PsbI, PsbJ, PsbK, PsbL, PsbM, PsbT, PsbX, PsbY, PsbZ, Psb30/Ycf12, at least 3 peripheral proteins of the oxygen-evolving complex and a large number of cofactors. It forms dimeric complexes. The cofactor is Binds multiple chlorophylls. PSII binds additional chlorophylls, carotenoids and specific lipids..

It is found in the plastid. The protein localises to the chloroplast thylakoid membrane. Functionally, one of the components of the core complex of photosystem II (PSII). It binds chlorophyll and helps catalyze the primary light-induced photochemical processes of PSII. PSII is a light-driven water:plastoquinone oxidoreductase, using light energy to abstract electrons from H(2)O, generating O(2) and a proton gradient subsequently used for ATP formation. The chain is Photosystem II CP47 reaction center protein from Citrus sinensis (Sweet orange).